A 361-amino-acid polypeptide reads, in one-letter code: 3-dehydroquinate synthase (361 aa).

NAD(+)-binding positions include asparagine 41, 70–75 (DGEQYK), 104–108 (GVIGD), 128–129 (TT), lysine 141, lysine 150, 150–151 (KN), and 168–171 (CLTT). Zn(2+) contacts are provided by glutamate 183, histidine 246, and histidine 263.

Belongs to the sugar phosphate cyclases superfamily. Dehydroquinate synthase family. NAD(+) serves as cofactor. The cofactor is Co(2+). It depends on Zn(2+) as a cofactor.

The protein localises to the cytoplasm. The catalysed reaction is 7-phospho-2-dehydro-3-deoxy-D-arabino-heptonate = 3-dehydroquinate + phosphate. Its pathway is metabolic intermediate biosynthesis; chorismate biosynthesis; chorismate from D-erythrose 4-phosphate and phosphoenolpyruvate: step 2/7. Functionally, catalyzes the conversion of 3-deoxy-D-arabino-heptulosonate 7-phosphate (DAHP) to dehydroquinate (DHQ). In Vibrio cholerae serotype O1 (strain ATCC 39315 / El Tor Inaba N16961), this protein is 3-dehydroquinate synthase.